The following is a 138-amino-acid chain: Urease subunit beta (138 aa).

Residues 115–138 (RMRAAGFGDTGEAAPDDGDTESDQ) are disordered. A compositionally biased stretch (acidic residues) spans 128 to 138 (APDDGDTESDQ).

It belongs to the urease beta subunit family. Heterotrimer of UreA (gamma), UreB (beta) and UreC (alpha) subunits. Three heterotrimers associate to form the active enzyme.

Its subcellular location is the cytoplasm. The enzyme catalyses urea + 2 H2O + H(+) = hydrogencarbonate + 2 NH4(+). It functions in the pathway nitrogen metabolism; urea degradation; CO(2) and NH(3) from urea (urease route): step 1/1. This chain is Urease subunit beta, found in Haloarcula marismortui (strain ATCC 43049 / DSM 3752 / JCM 8966 / VKM B-1809) (Halobacterium marismortui).